The following is a 356-amino-acid chain: Butyrate kinase 2 (356 aa).

It belongs to the acetokinase family. As to quaternary structure, homodimer.

The protein resides in the cytoplasm. It carries out the reaction butanoate + ATP = butanoyl phosphate + ADP. It functions in the pathway lipid metabolism; butanoate metabolism. Catalyzes the conversion of butyryl-CoA through butyryl phosphate to butyrate. The polypeptide is Butyrate kinase 2 (buk2) (Clostridium acetobutylicum (strain ATCC 824 / DSM 792 / JCM 1419 / IAM 19013 / LMG 5710 / NBRC 13948 / NRRL B-527 / VKM B-1787 / 2291 / W)).